We begin with the raw amino-acid sequence, 622 residues long: Low affinity potassium transport system protein Kup (622 aa).

The next 12 membrane-spanning stretches (helical) occupy residues 9 to 29, 49 to 69, 103 to 123, 137 to 157, 165 to 185, 213 to 233, 247 to 267, 276 to 296, 337 to 357, 363 to 383, 396 to 416, and 419 to 439; these read LSAI…TSPL, VFGF…IKYL, VIMG…TPAI, PELD…LFMI, VGKL…GLGL, VSFI…ALYA, WFSV…ALLL, PFFL…AALA, IYIP…IVSF, LAAA…ILST, FVAL…SANL, and LLSG…IMTT.

This sequence belongs to the HAK/KUP transporter (TC 2.A.72) family.

The protein localises to the cell inner membrane. It carries out the reaction K(+)(in) + H(+)(in) = K(+)(out) + H(+)(out). In terms of biological role, responsible for the low-affinity transport of potassium into the cell. Likely operates as a K(+):H(+) symporter. This Citrobacter koseri (strain ATCC BAA-895 / CDC 4225-83 / SGSC4696) protein is Low affinity potassium transport system protein Kup.